A 120-amino-acid chain; its full sequence is Peptidyl-tRNA hydrolase (120 aa).

The protein belongs to the PTH2 family.

It is found in the cytoplasm. The enzyme catalyses an N-acyl-L-alpha-aminoacyl-tRNA + H2O = an N-acyl-L-amino acid + a tRNA + H(+). Functionally, the natural substrate for this enzyme may be peptidyl-tRNAs which drop off the ribosome during protein synthesis. The chain is Peptidyl-tRNA hydrolase from Sulfolobus acidocaldarius (strain ATCC 33909 / DSM 639 / JCM 8929 / NBRC 15157 / NCIMB 11770).